Consider the following 252-residue polypeptide: Isoprenyl transferase 2 (252 aa).

Residue aspartate 26 is part of the active site. Aspartate 26 contacts Mg(2+). Residues 27 to 30 (GNGR), tryptophan 31, arginine 39, histidine 43, and 71 to 73 (SSE) each bind substrate. Asparagine 74 (proton acceptor) is an active-site residue. Substrate is bound by residues tryptophan 75, arginine 77, arginine 194, and 200-202 (RLS). Glutamate 213 contributes to the Mg(2+) binding site.

Belongs to the UPP synthase family. Homodimer. The cofactor is Mg(2+).

Catalyzes the condensation of isopentenyl diphosphate (IPP) with allylic pyrophosphates generating different type of terpenoids. The protein is Isoprenyl transferase 2 of Bradyrhizobium diazoefficiens (strain JCM 10833 / BCRC 13528 / IAM 13628 / NBRC 14792 / USDA 110).